Reading from the N-terminus, the 92-residue chain is Small ribosomal subunit protein uS19 (92 aa).

The protein belongs to the universal ribosomal protein uS19 family.

Its function is as follows. Protein S19 forms a complex with S13 that binds strongly to the 16S ribosomal RNA. This Geobacillus sp. (strain WCH70) protein is Small ribosomal subunit protein uS19.